We begin with the raw amino-acid sequence, 318 residues long: Pantothenate kinase (318 aa).

96–103 (GSVSVGKS) is an ATP binding site.

The protein belongs to the prokaryotic pantothenate kinase family.

It localises to the cytoplasm. It catalyses the reaction (R)-pantothenate + ATP = (R)-4'-phosphopantothenate + ADP + H(+). It participates in cofactor biosynthesis; coenzyme A biosynthesis; CoA from (R)-pantothenate: step 1/5. This Bradyrhizobium sp. (strain BTAi1 / ATCC BAA-1182) protein is Pantothenate kinase.